We begin with the raw amino-acid sequence, 141 residues long: Large ribosomal subunit protein uL16 (141 aa).

It belongs to the universal ribosomal protein uL16 family. In terms of assembly, part of the 50S ribosomal subunit.

Its function is as follows. Binds 23S rRNA and is also seen to make contacts with the A and possibly P site tRNAs. This Geobacillus kaustophilus (strain HTA426) protein is Large ribosomal subunit protein uL16.